A 479-amino-acid polypeptide reads, in one-letter code: Nuclear envelope integral membrane protein 2 (479 aa).

The signal sequence occupies residues methionine 1–glycine 23. A glycan (N-linked (GlcNAc...) asparagine) is linked at asparagine 69. Transmembrane regions (helical) follow at residues leucine 172–leucine 192, leucine 203–leucine 223, histidine 233–tyrosine 253, isoleucine 276–leucine 296, and isoleucine 301–alanine 321. Asparagine 414 carries N-linked (GlcNAc...) asparagine glycosylation. Positions asparagine 414–phenylalanine 479 are disordered. Over residues asparagine 438–proline 449 the composition is skewed to low complexity. Residues threonine 450 to proline 470 are compositionally biased toward pro residues.

It belongs to the NEMP family.

It localises to the nucleus inner membrane. Functionally, contributes to nuclear envelope stiffness in germ cells. Involved in male and female fertility. In Danio rerio (Zebrafish), this protein is Nuclear envelope integral membrane protein 2.